The chain runs to 164 residues: CB1 cannabinoid receptor-interacting protein 1 (164 aa).

It belongs to the CNRIP family. As to quaternary structure, interacts with the cannabinoid receptor CNR1 (via C-terminus). Does not interact with cannabinoid receptor CNR2.

In terms of biological role, suppresses cannabinoid receptor CNR1-mediated tonic inhibition of voltage-gated calcium channels. The polypeptide is CB1 cannabinoid receptor-interacting protein 1 (CNRIP1) (Bos taurus (Bovine)).